Reading from the N-terminus, the 423-residue chain is Imidazolonepropionase (423 aa).

His-78 and His-80 together coordinate Fe(3+). Zn(2+) contacts are provided by His-78 and His-80. Residues Arg-87, Tyr-150, and His-183 each contribute to the 4-imidazolone-5-propanoate site. Tyr-150 lines the N-formimidoyl-L-glutamate pocket. Residue His-247 coordinates Fe(3+). A Zn(2+)-binding site is contributed by His-247. Glu-250 serves as a coordination point for 4-imidazolone-5-propanoate. A Fe(3+)-binding site is contributed by Asp-322. Asp-322 is a binding site for Zn(2+). Positions 324 and 326 each coordinate N-formimidoyl-L-glutamate. Ser-327 is a 4-imidazolone-5-propanoate binding site.

This sequence belongs to the metallo-dependent hydrolases superfamily. HutI family. Requires Zn(2+) as cofactor. It depends on Fe(3+) as a cofactor.

The protein localises to the cytoplasm. It carries out the reaction 4-imidazolone-5-propanoate + H2O = N-formimidoyl-L-glutamate. It functions in the pathway amino-acid degradation; L-histidine degradation into L-glutamate; N-formimidoyl-L-glutamate from L-histidine: step 3/3. Its function is as follows. Catalyzes the hydrolytic cleavage of the carbon-nitrogen bond in imidazolone-5-propanoate to yield N-formimidoyl-L-glutamate. It is the third step in the universal histidine degradation pathway. This Bacillus cereus (strain B4264) protein is Imidazolonepropionase.